The following is a 105-amino-acid chain: Antithrombin-III (105 aa).

The N-terminal stretch at 1-17 is a signal peptide; sequence MHLFIGVSLRPLGHGIP. Residues 38 to 105 form a disordered region; that stretch reads ICIYRNPEKK…MRRTSSCRPS (68 aa). Basic and acidic residues predominate over residues 43 to 53; it reads NPEKKPQERRG.

It belongs to the serpin family. As to quaternary structure, forms protease inhibiting heterodimer with TMPRSS7. Plasma.

It localises to the secreted. The protein resides in the extracellular space. In terms of biological role, most important serine protease inhibitor in plasma that regulates the blood coagulation cascade. AT-III inhibits thrombin, matriptase-3/TMPRSS7, as well as factors IXa, Xa and XIa. Its inhibitory activity is greatly enhanced in the presence of heparin. This is Antithrombin-III (SERPINC1) from Gallus gallus (Chicken).